We begin with the raw amino-acid sequence, 84 residues long: Delta-stichotoxin-Sgt3a (84 aa).

The signal sequence occupies residues 1-19 (MAYLKIVLVALMLVVAVSA). Residues 20-33 (MRLSDQEDQDISVA) constitute a propeptide that is removed on maturation. Cystine bridges form between cysteine 38/cysteine 78, cysteine 40/cysteine 68, and cysteine 61/cysteine 79. Glycine 84 is a propeptide.

The protein belongs to the sea anemone sodium channel inhibitory toxin family. Type II subfamily.

Its subcellular location is the secreted. It localises to the nematocyst. Its function is as follows. Binds specifically to voltage-gated sodium channels (Nav), thereby delaying their inactivation during signal transduction. This chain is Delta-stichotoxin-Sgt3a, found in Stichodactyla gigantea (Giant carpet anemone).